Consider the following 159-residue polypeptide: Cytochrome c-type biogenesis protein CcmE (159 aa).

The Cytoplasmic segment spans residues 1–23 (MNNSSLENSASLKVILKQRKKKR). The helical; Signal-anchor for type II membrane protein transmembrane segment at 24–44 (LLIILLCCLVMAIAASLVVYA) threads the bilayer. Residues 45 to 159 (MRHAVSFFRM…RLKKHYSVEK (115 aa)) lie on the Periplasmic side of the membrane. Heme-binding residues include His-138 and Tyr-142.

The protein belongs to the CcmE/CycJ family.

It localises to the cell inner membrane. Functionally, heme chaperone required for the biogenesis of c-type cytochromes. Transiently binds heme delivered by CcmC and transfers the heme to apo-cytochromes in a process facilitated by CcmF and CcmH. This chain is Cytochrome c-type biogenesis protein CcmE, found in Bartonella tribocorum (strain CIP 105476 / IBS 506).